The following is a 324-amino-acid chain: 2-dehydro-3-deoxygluconokinase (324 aa).

Residues glycine 35–asparagine 39, tyrosine 106–arginine 108, and arginine 170 each bind substrate. Residues asparagine 168–arginine 170, lysine 228–glycine 233, and glycine 258–aspartate 261 contribute to the ATP site. Substrate contacts are provided by aspartate 261 and aspartate 297. The Proton acceptor role is filled by aspartate 261.

The protein belongs to the carbohydrate kinase PfkB family.

It catalyses the reaction 2-dehydro-3-deoxy-D-gluconate + ATP = 2-dehydro-3-deoxy-6-phospho-D-gluconate + ADP + H(+). It functions in the pathway carbohydrate acid metabolism; 2-dehydro-3-deoxy-D-gluconate degradation; D-glyceraldehyde 3-phosphate and pyruvate from 2-dehydro-3-deoxy-D-gluconate: step 1/2. Its function is as follows. Catalyzes the phosphorylation of 2-keto-3-deoxygluconate (KDG) to produce 2-keto-3-deoxy-6-phosphogluconate (KDPG). The protein is 2-dehydro-3-deoxygluconokinase (kdgK) of Bacillus subtilis (strain 168).